Here is a 234-residue protein sequence, read N- to C-terminus: Phosphoribosylaminoimidazole-succinocarboxamide synthase (234 aa).

This sequence belongs to the SAICAR synthetase family.

The enzyme catalyses 5-amino-1-(5-phospho-D-ribosyl)imidazole-4-carboxylate + L-aspartate + ATP = (2S)-2-[5-amino-1-(5-phospho-beta-D-ribosyl)imidazole-4-carboxamido]succinate + ADP + phosphate + 2 H(+). The protein operates within purine metabolism; IMP biosynthesis via de novo pathway; 5-amino-1-(5-phospho-D-ribosyl)imidazole-4-carboxamide from 5-amino-1-(5-phospho-D-ribosyl)imidazole-4-carboxylate: step 1/2. The polypeptide is Phosphoribosylaminoimidazole-succinocarboxamide synthase (Exiguobacterium sp. (strain ATCC BAA-1283 / AT1b)).